We begin with the raw amino-acid sequence, 104 residues long: Pole-localizer protein TmaR (104 aa).

Coiled coils occupy residues 7–34 and 76–96; these read IVNQ…NRKR and SAEI…LTEE.

Belongs to the pole-localizer TmaR family.

It is found in the cytoplasm. Pole-localizer protein involved in the regulation of several cellular processes. The protein is Pole-localizer protein TmaR of Vibrio campbellii (strain ATCC BAA-1116).